We begin with the raw amino-acid sequence, 363 residues long: Fructose-1,6-bisphosphatase 1 (363 aa).

N-acetylvaline is present on valine 2. Residues 18-22 and 28-32 contribute to the AMP site; these read VLEEG and TGEMT. Mg(2+) contacts are provided by aspartate 69 and glutamate 98. 113–114 contributes to the AMP binding site; that stretch reads KY. Residues aspartate 119, leucine 121, and aspartate 122 each contribute to the Mg(2+) site. 122 to 125 provides a ligand contact to substrate; that stretch reads DGSS. Arginine 141 is a binding site for AMP. Lysine 151 bears the N6-succinyllysine mark. Substrate-binding positions include 213–216, 244–249, tyrosine 265, and 275–277; these read NEGY, RYVGSM, and KLR. A phosphotyrosine mark is found at tyrosine 216, tyrosine 245, and tyrosine 265. Position 281 (glutamate 281) interacts with Mg(2+). 2 positions are modified to phosphoserine: serine 339 and serine 353.

This sequence belongs to the FBPase class 1 family. In terms of assembly, homotetramer. Mg(2+) serves as cofactor.

The enzyme catalyses beta-D-fructose 1,6-bisphosphate + H2O = beta-D-fructose 6-phosphate + phosphate. It participates in carbohydrate biosynthesis; gluconeogenesis. With respect to regulation, subject to complex allosteric regulation. The enzyme can assume an active R-state, or an inactive T-state. Intermediate conformations may exist. AMP acts as an allosteric inhibitor. AMP binding affects the turnover of bound substrate and not the affinity for substrate. Fructose 2,6-bisphosphate acts as a competitive inhibitor. Fructose 2,6-bisphosphate and AMP have synergistic effects. Catalyzes the hydrolysis of fructose 1,6-bisphosphate to fructose 6-phosphate in the presence of divalent cations, acting as a rate-limiting enzyme in gluconeogenesis. Plays a role in regulating glucose sensing and insulin secretion of pancreatic beta-cells. Appears to modulate glycerol gluconeogenesis in liver. Important regulator of appetite and adiposity; increased expression of the protein in liver after nutrient excess increases circulating satiety hormones and reduces appetite-stimulating neuropeptides and thus seems to provide a feedback mechanism to limit weight gain. The chain is Fructose-1,6-bisphosphatase 1 (Fbp1) from Rattus norvegicus (Rat).